A 300-amino-acid polypeptide reads, in one-letter code: Porphobilinogen deaminase (300 aa).

Cysteine 243 is subject to S-(dipyrrolylmethanemethyl)cysteine.

It belongs to the HMBS family. Monomer. It depends on dipyrromethane as a cofactor.

It carries out the reaction 4 porphobilinogen + H2O = hydroxymethylbilane + 4 NH4(+). The protein operates within porphyrin-containing compound metabolism; protoporphyrin-IX biosynthesis; coproporphyrinogen-III from 5-aminolevulinate: step 2/4. In terms of biological role, tetrapolymerization of the monopyrrole PBG into the hydroxymethylbilane pre-uroporphyrinogen in several discrete steps. This is Porphobilinogen deaminase from Clostridium novyi (strain NT).